We begin with the raw amino-acid sequence, 297 residues long: Large ribosomal subunit protein uL10 (297 aa).

The protein belongs to the universal ribosomal protein uL10 family. In terms of assembly, part of the 50S ribosomal subunit. Forms part of the ribosomal stalk which helps the ribosome interact with GTP-bound translation factors. Forms a heptameric L10(L12)2(L12)2(L12)2 complex, where L10 forms an elongated spine to which the L12 dimers bind in a sequential fashion.

Functionally, forms part of the ribosomal stalk, playing a central role in the interaction of the ribosome with GTP-bound translation factors. The sequence is that of Large ribosomal subunit protein uL10 from Methanococcus voltae.